Consider the following 227-residue polypeptide: ATP-dependent dethiobiotin synthetase BioD (227 aa).

13–18 (DIGKTY) lines the ATP pocket. Threonine 17 provides a ligand contact to Mg(2+). Lysine 38 is a catalytic residue. Serine 42 is a binding site for substrate. Residues aspartate 55, 116 to 119 (EGSG), and 179 to 180 (NN) contribute to the ATP site. Mg(2+) contacts are provided by aspartate 55 and glutamate 116.

This sequence belongs to the dethiobiotin synthetase family. As to quaternary structure, homodimer. The cofactor is Mg(2+).

Its subcellular location is the cytoplasm. It catalyses the reaction (7R,8S)-7,8-diammoniononanoate + CO2 + ATP = (4R,5S)-dethiobiotin + ADP + phosphate + 3 H(+). Its pathway is cofactor biosynthesis; biotin biosynthesis; biotin from 7,8-diaminononanoate: step 1/2. Functionally, catalyzes a mechanistically unusual reaction, the ATP-dependent insertion of CO2 between the N7 and N8 nitrogen atoms of 7,8-diaminopelargonic acid (DAPA, also called 7,8-diammoniononanoate) to form a ureido ring. The protein is ATP-dependent dethiobiotin synthetase BioD of Clostridium botulinum (strain Loch Maree / Type A3).